Consider the following 74-residue polypeptide: MLHDPNDDPSEYVIYVIDRGSSSGLRRIWGDEIQDVKRGFLVLWNAEIPVHRVIRVERGGRVIWERGRRARGRR.

The protein belongs to the UPF0248 family.

The sequence is that of UPF0248 protein MK0350 from Methanopyrus kandleri (strain AV19 / DSM 6324 / JCM 9639 / NBRC 100938).